We begin with the raw amino-acid sequence, 307 residues long: Elongation factor Ts (307 aa).

Positions 80 to 83 are involved in Mg(2+) ion dislocation from EF-Tu; sequence TDFV.

Belongs to the EF-Ts family.

The protein localises to the cytoplasm. In terms of biological role, associates with the EF-Tu.GDP complex and induces the exchange of GDP to GTP. It remains bound to the aminoacyl-tRNA.EF-Tu.GTP complex up to the GTP hydrolysis stage on the ribosome. The polypeptide is Elongation factor Ts (Bradyrhizobium sp. (strain ORS 278)).